The chain runs to 303 residues: RELT-like protein 2 (303 aa).

Residues 15-35 (LYMLFLLVLVFFLMGLVGFMI) traverse the membrane as a helical segment. Disordered regions lie at residues 47–68 (RTSRGSEPDDAQLQPPEDDDVN), 135–214 (CSRS…QPRT), and 249–303 (PCTL…AGGM). S52 is modified (phosphoserine). Basic and acidic residues-rich tracts occupy residues 148–158 (RSKEGKSRPRP) and 172–188 (THIEKRYGLHEHRDGSP). A compositionally biased stretch (gly residues) spans 194–212 (GSGGGQEPGGSQAAGGGQP). A compositionally biased stretch (polar residues) spans 274–295 (GLSSQEANGQPTKLDTSGQQES).

The protein belongs to the RELT family. In terms of assembly, interacts with RELT, RELL1, OXSR1, PLSCR1 and TRAF2.

The protein resides in the cell membrane. In terms of biological role, induces activation of MAPK14/p38 cascade, when overexpressed. Induces apoptosis, when overexpressed. The chain is RELT-like protein 2 (Rell2) from Mus musculus (Mouse).